We begin with the raw amino-acid sequence, 105 residues long: MQFTSFAILAISAVASARVTRRDDSSATGADKGGTCAVGSQISCCTTNSSGSDILGNVLGGSCLLDNVSLISSLNSNCPAGNTFCCPSNQDGTLNINVSCIPVSA.

The first 17 residues, 1–17 (MQFTSFAILAISAVASA), serve as a signal peptide directing secretion. Intrachain disulfides connect C36-C85, C44-C78, C45-C63, and C86-C100. 3 N-linked (GlcNAc...) asparagine glycosylation sites follow: N48, N67, and N97.

Belongs to the fungal hydrophobin family. As to quaternary structure, self-assembles to form functional amyloid fibrils called rodlets. Self-assembly into fibrillar rodlets occurs spontaneously at hydrophobic:hydrophilic interfaces and the rodlets further associate laterally to form amphipathic monolayers. In terms of tissue distribution, abundant on conidia and aerial structures formed in vitro and emerging from disease lesions on infected tomato plants.

Its subcellular location is the secreted. It is found in the cell wall. Aerial growth, conidiation, and dispersal of filamentous fungi in the environment rely upon a capability of their secreting small amphipathic proteins called hydrophobins (HPBs) with low sequence identity. Class I can self-assemble into an outermost layer of rodlet bundles on aerial cell surfaces, conferring cellular hydrophobicity that supports fungal growth, development and dispersal; whereas Class II form highly ordered films at water-air interfaces through intermolecular interactions but contribute nothing to the rodlet structure. Hcf-1 is a class I hydrophobin that is not necessary for the development of hyphae or conidia but acts as the main determinant of conidium hydrophobicity and, thus, is required for efficient water-mediated dispersal of conidia. Forms a component of the rodlet layer, but other hydrophobins must also participate in this proces. This is Class I hydrophobin 1 from Passalora fulva (Tomato leaf mold).